Consider the following 377-residue polypeptide: Actin-related protein 2/3 complex subunit 1 (377 aa).

WD repeat units lie at residues Ile9–Ala48, Asp53–Gln92, Arg98–Lys139, Pro144–Lys183, and Pro203–Arg242. Residues Gly293–Gly313 are disordered. Residues Val342–Thr376 form a WD 6 repeat.

The protein belongs to the WD repeat ARPC1 family. As to quaternary structure, component of the Arp2/3 complex composed of arp2, act2, arc1/p41-ARC, arc2/p34-ARC, arc3/p21-ARC, arc4/p20-ARC and arc5/p16-ARC.

The protein localises to the cytoplasm. The protein resides in the cytoskeleton. It is found in the actin patch. Functionally, functions as a component of the Arp2/3 complex which is involved in regulation of actin polymerization and together with an activating nucleation-promoting factor (NPF) mediates the formation of branched actin networks. The chain is Actin-related protein 2/3 complex subunit 1 (arc1) from Schizosaccharomyces pombe (strain 972 / ATCC 24843) (Fission yeast).